The primary structure comprises 215 residues: 3-demethoxyubiquinol 3-hydroxylase (215 aa).

6 residues coordinate Fe cation: E64, E94, H97, E146, E178, and H181.

The protein belongs to the COQ7 family. Fe cation serves as cofactor.

It localises to the cell membrane. The enzyme catalyses a 5-methoxy-2-methyl-3-(all-trans-polyprenyl)benzene-1,4-diol + AH2 + O2 = a 3-demethylubiquinol + A + H2O. It functions in the pathway cofactor biosynthesis; ubiquinone biosynthesis. Catalyzes the hydroxylation of 2-nonaprenyl-3-methyl-6-methoxy-1,4-benzoquinol during ubiquinone biosynthesis. The sequence is that of 3-demethoxyubiquinol 3-hydroxylase from Pseudomonas fluorescens (strain ATCC BAA-477 / NRRL B-23932 / Pf-5).